Here is a 663-residue protein sequence, read N- to C-terminus: Transcriptional repressor CTCFL (663 aa).

The segment covering 24–51 (EKGLKEEEKDGVCREKDHRSPSELEAER) has biased composition (basic and acidic residues). Disordered stretches follow at residues 24–55 (EKGL…TSGA) and 221–250 (NSNV…QRKT). 10 consecutive C2H2-type zinc fingers follow at residues 257–279 (FHCD…MKTH), 285–307 (HLCH…VNTH), 313–336 (YKCN…RYKH), 342–364 (FKCS…VRSH), 370–392 (FQCC…MRTH), 398–421 (YECH…LQKH), 428–451 (YQCP…RNLH), 458–480 (LKCR…QKTH), 486–508 (FKCK…IRTH), and 514–537 (FTCL…RKYH). A C2H2-type 11; atypical zinc finger spans residues 546 to 568 (YKCSKCGKGFSRWINLHRHSEKC). The segment at 569-630 (GSGEAKSAAS…STTKGEQFPG (62 aa)) is disordered. Residues 580–590 (KGRRTRKRKQT) are compositionally biased toward basic residues. Residues 594-607 (EATKGQKEAAKGWK) show a composition bias toward basic and acidic residues. Over residues 608–620 (EAANGDEAAAEEA) the composition is skewed to low complexity.

Belongs to the CTCF zinc-finger protein family. In terms of assembly, interacts with histones, PRMT7 and SETD1A. Interacts (via N-terminus) with BAG6/BAT3. As to expression, testis specific. Specifically expressed in primary spermatocytes.

The protein resides in the cytoplasm. It is found in the nucleus. Testis-specific DNA binding protein responsible for insulator function, nuclear architecture and transcriptional control, which probably acts by recruiting epigenetic chromatin modifiers. Plays a key role in gene imprinting in male germline, by participating in the establishment of differential methylation at the IGF2/H19 imprinted control region (ICR). Directly binds the unmethylated H19 ICR and recruits the PRMT7 methyltransferase, leading to methylate histone H4 'Arg-3' to form H4R3sme2. This probably leads to recruit de novo DNA methyltransferases at these sites. Seems to act as tumor suppressor. In association with DNMT1 and DNMT3B, involved in activation of BAG1 gene expression by binding to its promoter. Required for dimethylation of H3 lysine 4 (H3K4me2) of MYC and BRCA1 promoters. This Homo sapiens (Human) protein is Transcriptional repressor CTCFL (CTCFL).